The following is a 689-amino-acid chain: MTELKFKGVYVEDIGHLTCGTLTLTENSINFIGDKGGKSVYITGTDVDKLKWQKLGNKPGLRVGLSDGGAHRFGGFLDDDLQKIQSFTSSNWSKSINQSNLFINGWNYGQADVKGKNIEFSWENEPIFEIPCTNVSNVIANKNEAILEFHQNEQSKVQLMEMRFHMPVDLENEEDTDKVEEFKKAVLAYAGLEAETEQPICLLTDILCTTPRGRYDIKVYPTSIALHGKTYDYKIPVKTINRLFLVPHKDGRQVYFVLSLNPPIRQGQTHYSYLIFEFGKDEEEDLELSLTDEQLDYFNGNLQREMTGPIYETISILFKSICNLKVTVPGRFLGSSGTPAIQCTHRQNLGLLYPMEKGFLFIQKPVMYIRFEEISSCHFARSDSGTVTRTFDFEIDLKTGSSLTFSAMDKEENNKLFDYLNKKEIKIRNSHRIDNKSAGYGSSDEDDIDPYKSTVKAEGREQDDDSDDESTDEDYDLDKDMKKQKNDKDSSEGSGSEPDDEYDSGSEKDASGTGESDPDEENIEPKKKESKEKKNKREKKEKPVKEKAVKKGKKTKDPNEPKRATTAYIIWFNANRNSMKEDGDTLGDVAKKAGAKWKSMSADDKKEWNDKAAQDKARYEAEMKEYKKNGGGVEKASGPSTKKSSDQSPGKQFKSKEHISDTDDSDDDEPLKAKKDESDAASESSGESD.

2 disordered regions span residues 434–565 (DNKS…KRAT) and 592–689 (KAGA…GESD). Acidic residues predominate over residues 461 to 477 (EQDDDSDDESTDEDYDL). Composition is skewed to basic and acidic residues over residues 478–491 (DKDM…KDSS), 523–532 (IEPKKKESKE), 538–563 (EKKE…EPKR), and 601–628 (SADD…EYKK). Residues 561-627 (PKRATTAYII…RYEAEMKEYK (67 aa)) constitute a DNA-binding region (HMG box). A compositionally biased stretch (polar residues) spans 638–650 (GPSTKKSSDQSPG).

This sequence belongs to the SSRP1 family. As to quaternary structure, component of the FACT complex, a stable heterodimer of hmg-3 and spt-16. The FACT complex may also include hmg-4 instead of hmg-3. Expressed in the germline.

Its subcellular location is the nucleus. It is found in the chromosome. Component of the FACT complex, a general chromatin factor that acts to reorganize nucleosomes. The FACT complex is involved in multiple processes that require DNA as a template such as mRNA elongation, DNA replication and DNA repair. During transcription elongation the FACT complex acts as a histone chaperone that both destabilizes and restores nucleosomal structure. It facilitates the passage of RNA polymerase II and transcription by promoting the dissociation of one histone H2A-H2B dimer from the nucleosome, then subsequently promotes the reestablishment of the nucleosome following the passage of RNA polymerase II. Binds specifically to double-stranded DNA. In embryos, may function redundantly with hmg-4 to promote cell cycle progression and development of the anterior pharynx. In the germline, acts non-redundantly with hmg-4 to play a role in oocyte development. The polypeptide is FACT complex subunit ssrp1-B (Caenorhabditis elegans).